The sequence spans 147 residues: Small ribosomal subunit protein uS12 (147 aa).

It belongs to the universal ribosomal protein uS12 family. In terms of assembly, part of the 30S ribosomal subunit.

With S4 and S5 plays an important role in translational accuracy. Located at the interface of the 30S and 50S subunits. This Hyperthermus butylicus (strain DSM 5456 / JCM 9403 / PLM1-5) protein is Small ribosomal subunit protein uS12.